We begin with the raw amino-acid sequence, 358 residues long: E3 ubiquitin-protein ligase SIS3 (358 aa).

The signal sequence occupies residues 1 to 27 (MAMRGVDFKWYDGFFLSMLATSVIIVA). 3 helical membrane-spanning segments follow: residues 40–60 (LHIW…FMFV), 85–105 (VVVL…WTVI), and 125–145 (GFLI…FICV). The segment at 235-276 (CLICLEEFHIGHEVRGLPCAHNFHVECIDQWLRLNVKCPRCR) adopts an RING-type; atypical zinc-finger fold. The tract at residues 336–358 (TALETAENGGVPPVLTDLSPSRR) is disordered.

As to expression, expressed in roots, stems, leaves, flowers and siliques.

It is found in the membrane. It carries out the reaction S-ubiquitinyl-[E2 ubiquitin-conjugating enzyme]-L-cysteine + [acceptor protein]-L-lysine = [E2 ubiquitin-conjugating enzyme]-L-cysteine + N(6)-ubiquitinyl-[acceptor protein]-L-lysine.. The protein operates within protein modification; protein ubiquitination. E3 ubiquitin protein ligase that acts as a positive regulator of sugar signaling during early seedling development. Possesses E3 ligase activity in vitro. The chain is E3 ubiquitin-protein ligase SIS3 (SIS3) from Arabidopsis thaliana (Mouse-ear cress).